The chain runs to 580 residues: Capsid vertex component 2 (580 aa).

2 interaction with major capsid protein/MCP regions span residues 1–49 and 1–50; these read MDPY…ETAA and MDPY…TAAE. A disordered region spans residues 108–129; it reads AEEADAARGDEPAGGGDGGAPP. The segment covering 119–128 has biased composition (gly residues); it reads PAGGGDGGAP.

It belongs to the herpesviridae CVC2 protein family. Heterodimerizes with CVC1. Interacts with major capsid protein/MCP and triplex capsid protein 1/TRX1 at the pentamer vertices. Interacts with the large tegument protein/LTP. Interacts with host NUP214; this interaction might be essential to the capsid docking to the host nuclear pore. Interacts with host TMEM250.

It is found in the virion. It localises to the host nucleus. Its function is as follows. Capsid vertex-specific component that plays a role during viral DNA encapsidation, assuring correct genome cleavage and presumably stabilizing capsids that contain full-length viral genomes. Participates in the interaction between the capsid and the tegument through interaction with the large tegument protein/LTP. May mediate the capsid docking to the nuclear pore allowing entry of the viral genome into the host nucleus through binding to host nucleoporins NUP214. This chain is Capsid vertex component 2, found in Human herpesvirus 1 (strain 17) (HHV-1).